The following is a 187-amino-acid chain: Large ribosomal subunit protein uL22A (187 aa).

It belongs to the universal ribosomal protein uL22 family. In terms of assembly, component of the large ribosomal subunit (LSU). Mature yeast ribosomes consist of a small (40S) and a large (60S) subunit. The 40S small subunit contains 1 molecule of ribosomal RNA (18S rRNA) and at least 33 different proteins. The large 60S subunit contains 3 rRNA molecules (25S, 5.8S and 5S rRNA) and at least 46 different proteins. uL22 is associated with the polypeptide exit tunnel.

It is found in the cytoplasm. In terms of biological role, component of the ribosome, a large ribonucleoprotein complex responsible for the synthesis of proteins in the cell. The small ribosomal subunit (SSU) binds messenger RNAs (mRNAs) and translates the encoded message by selecting cognate aminoacyl-transfer RNA (tRNA) molecules. The large subunit (LSU) contains the ribosomal catalytic site termed the peptidyl transferase center (PTC), which catalyzes the formation of peptide bonds, thereby polymerizing the amino acids delivered by tRNAs into a polypeptide chain. The nascent polypeptides leave the ribosome through a tunnel in the LSU and interact with protein factors that function in enzymatic processing, targeting, and the membrane insertion of nascent chains at the exit of the ribosomal tunnel. This is Large ribosomal subunit protein uL22A (rpl1701) from Schizosaccharomyces pombe (strain 972 / ATCC 24843) (Fission yeast).